Here is a 150-residue protein sequence, read N- to C-terminus: D-aminoacyl-tRNA deacylase (150 aa).

A Gly-cisPro motif, important for rejection of L-amino acids motif is present at residues 136–137; sequence GP.

This sequence belongs to the DTD family. Homodimer.

The protein resides in the cytoplasm. It catalyses the reaction glycyl-tRNA(Ala) + H2O = tRNA(Ala) + glycine + H(+). It carries out the reaction a D-aminoacyl-tRNA + H2O = a tRNA + a D-alpha-amino acid + H(+). Its function is as follows. An aminoacyl-tRNA editing enzyme that deacylates mischarged D-aminoacyl-tRNAs. Also deacylates mischarged glycyl-tRNA(Ala), protecting cells against glycine mischarging by AlaRS. Acts via tRNA-based rather than protein-based catalysis; rejects L-amino acids rather than detecting D-amino acids in the active site. By recycling D-aminoacyl-tRNA to D-amino acids and free tRNA molecules, this enzyme counteracts the toxicity associated with the formation of D-aminoacyl-tRNA entities in vivo and helps enforce protein L-homochirality. The sequence is that of D-aminoacyl-tRNA deacylase from Staphylococcus carnosus (strain TM300).